Here is a 243-residue protein sequence, read N- to C-terminus: 1-(5-phosphoribosyl)-5-[(5-phosphoribosylamino)methylideneamino] imidazole-4-carboxamide isomerase (243 aa).

The active-site Proton acceptor is the Asp-8. Asp-130 acts as the Proton donor in catalysis.

It belongs to the HisA/HisF family.

The protein resides in the cytoplasm. It catalyses the reaction 1-(5-phospho-beta-D-ribosyl)-5-[(5-phospho-beta-D-ribosylamino)methylideneamino]imidazole-4-carboxamide = 5-[(5-phospho-1-deoxy-D-ribulos-1-ylimino)methylamino]-1-(5-phospho-beta-D-ribosyl)imidazole-4-carboxamide. It functions in the pathway amino-acid biosynthesis; L-histidine biosynthesis; L-histidine from 5-phospho-alpha-D-ribose 1-diphosphate: step 4/9. In Ruthia magnifica subsp. Calyptogena magnifica, this protein is 1-(5-phosphoribosyl)-5-[(5-phosphoribosylamino)methylideneamino] imidazole-4-carboxamide isomerase.